Reading from the N-terminus, the 1524-residue chain is DNA-directed RNA polymerase subunit beta' (1524 aa).

Residues Cys-58, Cys-60, Cys-73, and Cys-76 each contribute to the Zn(2+) site. Asp-739, Asp-741, and Asp-743 together coordinate Mg(2+). Zn(2+) is bound by residues Cys-1112, Cys-1194, Cys-1201, and Cys-1204. The disordered stretch occupies residues 1501 to 1524 (EAVEAKERPAARRGVKREQPGKQA).

The protein belongs to the RNA polymerase beta' chain family. In terms of assembly, the RNAP catalytic core consists of 2 alpha, 1 beta, 1 beta' and 1 omega subunit. When a sigma factor is associated with the core the holoenzyme is formed, which can initiate transcription. It depends on Mg(2+) as a cofactor. Requires Zn(2+) as cofactor.

It catalyses the reaction RNA(n) + a ribonucleoside 5'-triphosphate = RNA(n+1) + diphosphate. In terms of biological role, DNA-dependent RNA polymerase catalyzes the transcription of DNA into RNA using the four ribonucleoside triphosphates as substrates. In Thermus thermophilus (strain ATCC BAA-163 / DSM 7039 / HB27), this protein is DNA-directed RNA polymerase subunit beta'.